Reading from the N-terminus, the 338-residue chain is MSENAYAKSGVDVEAGYEVVSRIKKHVAKTERLGVLGALGGFGGSFDLSVLDVKEPVLISGTDGVGTKLMLAIQADKHDTIGIDCVAMCVNDIIAAGAEPLYFLDYIATGKNIPEKLEQVVAGVAEGCLQAGAALIGGETAEMPGMYDEDDYDLAGFAVGVAEKSQLIDGEKDVEAGDVLLGLASSGIHSNGYSLVRKVFSDFDLNESLPELDQSLIDTLLTPTKIYVKELLPLIKQNKIKGIAHITGGGFHENLPRMFGNSLSAEIVEGSWNILPIFKALEKYGDIKHEEMYEIFNMGIGMVIAVAPENAEALKKVLNAFEIGKMVKRQDSAVVIKK.

This sequence belongs to the AIR synthase family.

The protein localises to the cytoplasm. The enzyme catalyses 2-formamido-N(1)-(5-O-phospho-beta-D-ribosyl)acetamidine + ATP = 5-amino-1-(5-phospho-beta-D-ribosyl)imidazole + ADP + phosphate + H(+). Its pathway is purine metabolism; IMP biosynthesis via de novo pathway; 5-amino-1-(5-phospho-D-ribosyl)imidazole from N(2)-formyl-N(1)-(5-phospho-D-ribosyl)glycinamide: step 2/2. This is Phosphoribosylformylglycinamidine cyclo-ligase from Lactococcus lactis subsp. lactis (strain IL1403) (Streptococcus lactis).